The chain runs to 500 residues: MEQFFALFTIFLSFAFPGRCSDVFSRSDFPEGFLFGAGTSAYQWEGAAAEDGRKPSVWDTLCYSRNIGNGDVTCDGYHKYKEDVKLMVDTNLDAFRFSISWSRLIPNGRGSVNQKGLQFYKNLISELITHGIEPHVTLYHYDHPQYLEDEYGGWVNNMMIKDFTAYVDVCFREFGNYVKFWTTINEANVFTIGGYNDGDTPPGRCSLPGKNCLLGNSSTETYIVGHNLLLAHASASRLYKQKYKDKQGGSIGFGLYLMGLTPSTSSKDDAIATQRAKDFYFGWFLGPLIFGDYPDTMKRTIGSRLPVFSEEESEQVKGSSDFIGINHYFAASVTNIKFKPSISGNPDFYSDMGAYVTYLGNFSVIEYPVAPWTMEAVLEYIKQSYDNPPVYILENGTPMTQHKDTHRVEYMNAYIGGVLKSIRNGSDTRGYFVWSFMDLFELIGRYDYGYGLYSVNFSDPHRKRSPRLSAHWYSDFLKGKTSFLDSKGIKELQSNFSSSS.

A signal peptide spans 1–20; it reads MEQFFALFTIFLSFAFPGRC. Residues Gln43, His140, and 185-186 each bind a beta-D-glucoside; that span reads NE. Glu186 acts as the Proton donor in catalysis. Cys205 and Cys212 are joined by a disulfide. N-linked (GlcNAc...) asparagine glycosylation is present at Asn216. Tyr328 contributes to the a beta-D-glucoside binding site. The N-linked (GlcNAc...) asparagine glycan is linked to Asn361. Glu394 serves as a coordination point for a beta-D-glucoside. The active-site Nucleophile is Glu394. Residue Asn424 is glycosylated (N-linked (GlcNAc...) asparagine). A beta-D-glucoside is bound by residues Trp434 and Tyr450. N-linked (GlcNAc...) asparagine glycans are attached at residues Asn456 and Asn495.

This sequence belongs to the glycosyl hydrolase 1 family.

The enzyme catalyses Hydrolysis of terminal, non-reducing beta-D-glucosyl residues with release of beta-D-glucose.. This is Putative beta-glucosidase 5 from Arabidopsis thaliana (Mouse-ear cress).